A 65-amino-acid polypeptide reads, in one-letter code: MPKVIEAVYENGVFKPLQKVDLKEGEKVKVELKESVVESVAGILKVSDEKVKKALEMIEYGEDIY.

The protein belongs to the UPF0165 family.

Its function is as follows. Possibly the antitoxin component of a type II toxin-antitoxin (TA) system. Its cognate toxin is VapC7 (Potential). In Archaeoglobus fulgidus (strain ATCC 49558 / DSM 4304 / JCM 9628 / NBRC 100126 / VC-16), this protein is Putative antitoxin VapB7 (vapB7).